A 218-amino-acid chain; its full sequence is uncharacterized protein (218 aa).

The next 4 helical transmembrane spans lie at 10 to 30 (IPPL…SLGI), 55 to 75 (IGVG…GYSI), 147 to 167 (VTGG…AGMA), and 175 to 195 (FSWI…ILLR).

Belongs to the DedA family.

Its subcellular location is the cell membrane. This is an uncharacterized protein from Mycobacterium tuberculosis (strain CDC 1551 / Oshkosh).